Here is a 141-residue protein sequence, read N- to C-terminus: Putative pre-16S rRNA nuclease (141 aa).

This sequence belongs to the YqgF nuclease family.

The protein resides in the cytoplasm. Its function is as follows. Could be a nuclease involved in processing of the 5'-end of pre-16S rRNA. This is Putative pre-16S rRNA nuclease from Desulforudis audaxviator (strain MP104C).